We begin with the raw amino-acid sequence, 34 residues long: Photosystem II reaction center protein Y (34 aa).

The Lumenal segment spans residues 1–5; it reads DWRVL. The chain crosses the membrane as a helical span at residues 6 to 22; it reads VVLLPVLLAAGWAVRNI. Residues 23-34 are Cytoplasmic-facing; sequence LPYAVKQVQKLL.

This sequence belongs to the PsbY family. As to quaternary structure, PSII is composed of 1 copy each of membrane proteins PsbA, PsbB, PsbC, PsbD, PsbE, PsbF, PsbH, PsbI, PsbJ, PsbK, PsbL, PsbM, PsbT, PsbX, PsbY, PsbZ, Psb30/Ycf12, peripheral proteins PsbO, CyanoQ (PsbQ), PsbU, PsbV and a large number of cofactors. It forms dimeric complexes. This protein is only loosely associated with PSII, and is not often found in crystals. It depends on PSII binds multiple chlorophylls, carotenoids and specific lipids. as a cofactor.

The protein localises to the cellular thylakoid membrane. Functionally, loosely associated component of the core of photosystem II (PSII). PSII is a light-driven water plastoquinone oxidoreductase, using light energy to abstract electrons from H(2)O, generating a proton gradient subsequently used for ATP formation. The sequence is that of Photosystem II reaction center protein Y from Thermostichus vulcanus (Synechococcus vulcanus).